The chain runs to 315 residues: 4-hydroxy-3-methylbut-2-enyl diphosphate reductase (315 aa).

Cysteine 12 contacts [4Fe-4S] cluster. The (2E)-4-hydroxy-3-methylbut-2-enyl diphosphate site is built by histidine 41 and histidine 74. Dimethylallyl diphosphate contacts are provided by histidine 41 and histidine 74. Residues histidine 41 and histidine 74 each contribute to the isopentenyl diphosphate site. Residue cysteine 96 participates in [4Fe-4S] cluster binding. A (2E)-4-hydroxy-3-methylbut-2-enyl diphosphate-binding site is contributed by histidine 124. Histidine 124 lines the dimethylallyl diphosphate pocket. Histidine 124 contributes to the isopentenyl diphosphate binding site. Catalysis depends on glutamate 126, which acts as the Proton donor. (2E)-4-hydroxy-3-methylbut-2-enyl diphosphate is bound at residue threonine 168. Cysteine 198 is a [4Fe-4S] cluster binding site. (2E)-4-hydroxy-3-methylbut-2-enyl diphosphate-binding residues include serine 226, serine 227, asparagine 228, and serine 270. 4 residues coordinate dimethylallyl diphosphate: serine 226, serine 227, asparagine 228, and serine 270. The isopentenyl diphosphate site is built by serine 226, serine 227, asparagine 228, and serine 270.

Belongs to the IspH family. It depends on [4Fe-4S] cluster as a cofactor.

The enzyme catalyses isopentenyl diphosphate + 2 oxidized [2Fe-2S]-[ferredoxin] + H2O = (2E)-4-hydroxy-3-methylbut-2-enyl diphosphate + 2 reduced [2Fe-2S]-[ferredoxin] + 2 H(+). It carries out the reaction dimethylallyl diphosphate + 2 oxidized [2Fe-2S]-[ferredoxin] + H2O = (2E)-4-hydroxy-3-methylbut-2-enyl diphosphate + 2 reduced [2Fe-2S]-[ferredoxin] + 2 H(+). The protein operates within isoprenoid biosynthesis; dimethylallyl diphosphate biosynthesis; dimethylallyl diphosphate from (2E)-4-hydroxy-3-methylbutenyl diphosphate: step 1/1. It functions in the pathway isoprenoid biosynthesis; isopentenyl diphosphate biosynthesis via DXP pathway; isopentenyl diphosphate from 1-deoxy-D-xylulose 5-phosphate: step 6/6. In terms of biological role, catalyzes the conversion of 1-hydroxy-2-methyl-2-(E)-butenyl 4-diphosphate (HMBPP) into a mixture of isopentenyl diphosphate (IPP) and dimethylallyl diphosphate (DMAPP). Acts in the terminal step of the DOXP/MEP pathway for isoprenoid precursor biosynthesis. The chain is 4-hydroxy-3-methylbut-2-enyl diphosphate reductase from Pseudomonas putida (strain GB-1).